A 418-amino-acid chain; its full sequence is UDP-N-acetylglucosamine 1-carboxyvinyltransferase (418 aa).

22-23 (KN) contributes to the phosphoenolpyruvate binding site. Arginine 93 contributes to the UDP-N-acetyl-alpha-D-glucosamine binding site. The active-site Proton donor is cysteine 117. Cysteine 117 is subject to 2-(S-cysteinyl)pyruvic acid O-phosphothioketal. The UDP-N-acetyl-alpha-D-glucosamine site is built by aspartate 306 and isoleucine 328.

It belongs to the EPSP synthase family. MurA subfamily.

It is found in the cytoplasm. The catalysed reaction is phosphoenolpyruvate + UDP-N-acetyl-alpha-D-glucosamine = UDP-N-acetyl-3-O-(1-carboxyvinyl)-alpha-D-glucosamine + phosphate. It participates in cell wall biogenesis; peptidoglycan biosynthesis. In terms of biological role, cell wall formation. Adds enolpyruvyl to UDP-N-acetylglucosamine. The sequence is that of UDP-N-acetylglucosamine 1-carboxyvinyltransferase from Hydrogenovibrio crunogenus (strain DSM 25203 / XCL-2) (Thiomicrospira crunogena).